The following is a 353-amino-acid chain: Photosystem II protein D1 (353 aa).

Thr-2 carries the N-acetylthreonine modification. A Phosphothreonine modification is found at Thr-2. Helical transmembrane passes span Tyr-29 to Ser-46, His-118 to Leu-133, and Trp-142 to Ala-156. Residue His-118 participates in chlorophyll a binding. Tyr-126 is a pheophytin a binding site. Residues Asp-170 and Glu-189 each coordinate [CaMn4O5] cluster. A helical membrane pass occupies residues Phe-197–Leu-218. His-198 provides a ligand contact to chlorophyll a. A quinone contacts are provided by residues His-215 and Ser-264–Phe-265. His-215 lines the Fe cation pocket. His-272 contacts Fe cation. A helical membrane pass occupies residues Phe-274–Leu-288. [CaMn4O5] cluster-binding residues include His-332, Glu-333, Asp-342, and Ala-344. Positions Thr-345–Ala-353 are excised as a propeptide.

Belongs to the reaction center PufL/M/PsbA/D family. In terms of assembly, PSII is composed of 1 copy each of membrane proteins PsbA, PsbB, PsbC, PsbD, PsbE, PsbF, PsbH, PsbI, PsbJ, PsbK, PsbL, PsbM, PsbT, PsbX, PsbY, PsbZ, Psb30/Ycf12, at least 3 peripheral proteins of the oxygen-evolving complex and a large number of cofactors. It forms dimeric complexes. It depends on The D1/D2 heterodimer binds P680, chlorophylls that are the primary electron donor of PSII, and subsequent electron acceptors. It shares a non-heme iron and each subunit binds pheophytin, quinone, additional chlorophylls, carotenoids and lipids. D1 provides most of the ligands for the Mn4-Ca-O5 cluster of the oxygen-evolving complex (OEC). There is also a Cl(-1) ion associated with D1 and D2, which is required for oxygen evolution. The PSII complex binds additional chlorophylls, carotenoids and specific lipids. as a cofactor. In terms of processing, tyr-161 forms a radical intermediate that is referred to as redox-active TyrZ, YZ or Y-Z. C-terminally processed by CTPA; processing is essential to allow assembly of the oxygen-evolving complex and thus photosynthetic growth.

It is found in the plastid membrane. The enzyme catalyses 2 a plastoquinone + 4 hnu + 2 H2O = 2 a plastoquinol + O2. Its function is as follows. Photosystem II (PSII) is a light-driven water:plastoquinone oxidoreductase that uses light energy to abstract electrons from H(2)O, generating O(2) and a proton gradient subsequently used for ATP formation. It consists of a core antenna complex that captures photons, and an electron transfer chain that converts photonic excitation into a charge separation. The D1/D2 (PsbA/PsbD) reaction center heterodimer binds P680, the primary electron donor of PSII as well as several subsequent electron acceptors. The chain is Photosystem II protein D1 from Cuscuta gronovii (Common dodder).